Here is a 172-residue protein sequence, read N- to C-terminus: R-phycocyanin beta chain (172 aa).

Residues asparagine 35 and aspartate 39 each contribute to the (2R,3E)-phycoerythrobilin site. (2R,3E)-phycocyanobilin contacts are provided by residues asparagine 72, cysteine 82, and 84–85; that span reads RD. N4-methylasparagine is present on asparagine 72. (2R,3E)-phycoerythrobilin is bound by residues 149 to 151 and cysteine 153; that span reads PAG.

Belongs to the phycobiliprotein family. As to quaternary structure, heterododecamer of 6 alpha and 6 beta chains. The basic functional unit of phycobiliproteins is a ring-shaped hexamer formed from two back-to-back trimers contacting via the alpha chain subunits. The trimers are composed of alpha/beta subunit heterodimers arranged around a three-fold axis of symmetry. The phycoerythrins also contain a gamma subunit which is located in the center of the hexamer. Contains one covalently linked phycocyanobilin chromophore and one covalently linked phycoerythrobilin chromophore.

It is found in the plastid. Its subcellular location is the chloroplast thylakoid membrane. Light-harvesting photosynthetic tetrapyrrole chromophore-protein from the phycobiliprotein complex (phycobilisome, PBS). Phycocyanin is the major phycobiliprotein in the PBS rod. The chain is R-phycocyanin beta chain (rpcB) from Polysiphonia urceolata (Red alga).